Here is a 543-residue protein sequence, read N- to C-terminus: Bifunctional purine biosynthesis protein PurH (543 aa).

An MGS-like domain is found at 5 to 151; the sequence is NHARPIRRAL…KNHKDVTIVV (147 aa).

Belongs to the PurH family.

It carries out the reaction (6R)-10-formyltetrahydrofolate + 5-amino-1-(5-phospho-beta-D-ribosyl)imidazole-4-carboxamide = 5-formamido-1-(5-phospho-D-ribosyl)imidazole-4-carboxamide + (6S)-5,6,7,8-tetrahydrofolate. It catalyses the reaction IMP + H2O = 5-formamido-1-(5-phospho-D-ribosyl)imidazole-4-carboxamide. It participates in purine metabolism; IMP biosynthesis via de novo pathway; 5-formamido-1-(5-phospho-D-ribosyl)imidazole-4-carboxamide from 5-amino-1-(5-phospho-D-ribosyl)imidazole-4-carboxamide (10-formyl THF route): step 1/1. Its pathway is purine metabolism; IMP biosynthesis via de novo pathway; IMP from 5-formamido-1-(5-phospho-D-ribosyl)imidazole-4-carboxamide: step 1/1. This Shewanella oneidensis (strain ATCC 700550 / JCM 31522 / CIP 106686 / LMG 19005 / NCIMB 14063 / MR-1) protein is Bifunctional purine biosynthesis protein PurH.